The primary structure comprises 146 residues: Hemoglobin subunit beta (146 aa).

At Val-1 the chain carries N-acetylvaline. Residues 2–146 (HLTAEEKSAV…VATALAHKYH (145 aa)) enclose the Globin domain. Thr-12 carries the post-translational modification Phosphothreonine. Position 44 is a phosphoserine (Ser-44). N6-acetyllysine is present on Lys-59. His-63 serves as a coordination point for heme b. Lys-82 bears the N6-acetyllysine mark. His-92 lines the heme b pocket. Position 93 is an S-nitrosocysteine (Cys-93). Lys-144 carries the post-translational modification N6-acetyllysine.

Belongs to the globin family. In terms of assembly, heterotetramer of two alpha chains and two beta chains. As to expression, red blood cells.

Involved in oxygen transport from the lung to the various peripheral tissues. The protein is Hemoglobin subunit beta (HBB) of Cebus albifrons (White-fronted capuchin).